Consider the following 611-residue polypeptide: tRNA uridine 5-carboxymethylaminomethyl modification enzyme MnmG (611 aa).

14-19 (GAGHAG) contributes to the FAD binding site. Residue 274 to 288 (GPRYCPSIEDKIVKF) participates in NAD(+) binding.

Belongs to the MnmG family. As to quaternary structure, homodimer. Heterotetramer of two MnmE and two MnmG subunits. Requires FAD as cofactor.

It is found in the cytoplasm. Its function is as follows. NAD-binding protein involved in the addition of a carboxymethylaminomethyl (cmnm) group at the wobble position (U34) of certain tRNAs, forming tRNA-cmnm(5)s(2)U34. The protein is tRNA uridine 5-carboxymethylaminomethyl modification enzyme MnmG of Chlamydia abortus (strain DSM 27085 / S26/3) (Chlamydophila abortus).